Reading from the N-terminus, the 86-residue chain is Kappa-theraphotoxin-Cg1a 3 (86 aa).

The N-terminal stretch at Met-1 to Ala-21 is a signal peptide. A propeptide spanning residues Ala-22 to Arg-50 is cleaved from the precursor. 3 disulfide bridges follow: Cys-52/Cys-66, Cys-59/Cys-71, and Cys-65/Cys-78. Phenylalanine amide is present on Phe-84.

This sequence belongs to the neurotoxin 10 (Hwtx-1) family. 28 (Jztx-11) subfamily. In terms of tissue distribution, expressed by the venom gland.

It localises to the secreted. Functionally, this toxin acts as a voltage-dependent gating-modifier. It inhibits the sodium conductance (IC(50)=124 nM) and slows the fast inactivation (EC(50)=1180 nM) of Nav1.5/SCN5A. It significantly shifts the activation to more depolarized voltages and decreases the deactivation of Nav1.5 currents upon extreme depolarization, but only slightly affects voltage-dependence of steady-state inactivation. In addition, this toxin causes an approximately five-fold decrease in the rate of recovery from inactivation and an approximately 1.9-fold reduction in the closed-state inactivation rate. This toxin integrates the functions of site 3 toxins (alpha-scorpion toxins) with site 4 toxins (beta-scorpion and spider toxins) by targeting multiple sites on Nav1.5. Also shows inhibition of voltage-gated potassium channels (5 uM completely inhibits Kv2.1/KCNB1, whereas 5 uM moderately inhibits Kv4.2/KCND2 Kv4.1/KCND1 channels). This is Kappa-theraphotoxin-Cg1a 3 from Chilobrachys guangxiensis (Chinese earth tiger tarantula).